A 501-amino-acid chain; its full sequence is MDITVFLSLTVVVFLAVIIFYGRNEERKRMLQKIPGAPSLPLIGTALPILYRRKEDRMTWIEEILEKYKPLILWYFGNRPFVNISSPELIEVVLRNTQLIDKAFLYDLFHSWLGTGLLTSSGAKWHQHRKIITPTFHFSILEGFITIFAEKSEILVRKLQKEVGRGPFFIRQYVSNCALDIICETAMGTSVNAQDEGFSEYVTAINKMTDVLSDRMANPLLYPEFIFKLTPYYWTHKKCLKVLNGFVNKIIQERKEERKKSKVTQTSEDADIGKKKRVPFLDTLLDASEDDNKLTDTDILEEVHTFMFEGHDTVSAAMTWLLFELGHHPEIQEEAYKEVQDIFQGSDRVPTMADLNNMNYLERVIKESLRLHPSVIYFVREAHQDFELGGYTIPAGTNIDFSVPFIHRNPEIFPNPRCFNPDNFLPDRVVNRHPYAYIPFSAGPRNCIGQRFALLEEKVVLSYLLRHYRFRTVNKREDSKFKLEMINTPVKPIQLIIEARN.

Heme-binding residues include Glu309 and Cys447.

It belongs to the cytochrome P450 family. The cofactor is heme.

The protein localises to the endoplasmic reticulum membrane. It is found in the microsome membrane. It carries out the reaction an organic molecule + reduced [NADPH--hemoprotein reductase] + O2 = an alcohol + oxidized [NADPH--hemoprotein reductase] + H2O + H(+). The polypeptide is Cytochrome P450 4c21 (CYP4C21) (Blattella germanica (German cockroach)).